Here is a 420-residue protein sequence, read N- to C-terminus: Trichothecene biosynthesis transcription regulator TRI10 (420 aa).

It belongs to the TRI10 transcription regulator family.

The protein resides in the nucleus. Functionally, transcriptional activator of all of the trichothecene biosynthesis genes. Acts upstream of the cluster-encoded transcription factor TRI6 and is necessary for full expression of both the other trichothecene genes and the genes for the primary metabolic pathway that precedes the trichothecene biosynthetic pathway. The polypeptide is Trichothecene biosynthesis transcription regulator TRI10 (Fusarium sporotrichioides).